A 160-amino-acid polypeptide reads, in one-letter code: Serine-protein kinase RsbW (160 aa).

This sequence belongs to the anti-sigma-factor family.

It catalyses the reaction L-seryl-[protein] + ATP = O-phospho-L-seryl-[protein] + ADP + H(+). The catalysed reaction is L-threonyl-[protein] + ATP = O-phospho-L-threonyl-[protein] + ADP + H(+). Negative regulator of sigma-B activity. Phosphorylates and inactivates its specific antagonist protein, RsbV. Upon phosphorylation of RsbV, RsbW is released and binds to sigma-B, thereby blocking its ability to form an RNA polymerase holoenzyme (E-sigma-B). The polypeptide is Serine-protein kinase RsbW (Bacillus mycoides (strain KBAB4) (Bacillus weihenstephanensis)).